We begin with the raw amino-acid sequence, 71 residues long: Small ribosomal subunit protein bS18c (71 aa).

This sequence belongs to the bacterial ribosomal protein bS18 family. Part of the 30S ribosomal subunit.

Its subcellular location is the plastid. It is found in the cyanelle. This Cyanophora paradoxa protein is Small ribosomal subunit protein bS18c (rps18).